A 239-amino-acid chain; its full sequence is Wilms tumor protein homolog (239 aa).

The short motif at Met43 to Gly51 is the 9aaTAD element. 3 consecutive C2H2-type zinc fingers follow at residues Phe113–His137, Tyr143–His167, and Phe173–His195. Important for interaction with target DNA regions lie at residues Ser157 to Lys171 and Ser183 to His191. The KTS motif motif lies at Lys198–Ser200. A C2H2-type 4 zinc finger spans residues Phe204–His228. Residue Lys234 forms a Glycyl lysine isopeptide (Lys-Gly) (interchain with G-Cter in SUMO2) linkage.

This sequence belongs to the EGR C2H2-type zinc-finger protein family. As to quaternary structure, interacts with ZNF224 via the zinc-finger region. Interacts with WTAP, AMER1 and SRY. Homodimer. Interacts with WTIP. Interacts with actively translating polysomes. Detected in nuclear ribonucleoprotein (mRNP) particles. Interacts with U2AF2. Interacts with HNRNPU via the zinc-finger region. Interacts with CITED2.

The protein resides in the nucleus speckle. It localises to the nucleus. It is found in the nucleoplasm. Its subcellular location is the cytoplasm. In terms of biological role, transcription factor that plays an important role in cellular development and cell survival. Recognizes and binds to the DNA sequence 5'-GCG(T/G)GGGCG-3'. Regulates the expression of numerous target genes, including EPO. Plays an essential role for development of the urogenital system. It has a tumor suppressor as well as an oncogenic role in tumor formation. Function may be isoform-specific: isoforms lacking the KTS motif may act as transcription factors. Isoforms containing the KTS motif may bind mRNA and play a role in mRNA metabolism or splicing. This Sminthopsis macroura (Stripe-faced dunnart) protein is Wilms tumor protein homolog (WT1).